A 381-amino-acid chain; its full sequence is Chaperone protein DnaJ (381 aa).

Residues 5 to 70 (DYYEVLGIER…EKRSAYDQFG (66 aa)) form the J domain. Residues 137–215 (GTTVDIRVPR…CHGEGRVRET (79 aa)) form a CR-type zinc finger. Cys150, Cys153, Cys167, Cys170, Cys189, Cys192, Cys203, and Cys206 together coordinate Zn(2+). CXXCXGXG motif repeat units follow at residues 150 to 157 (CEHCDGDG), 167 to 174 (CPTCHGQG), 189 to 196 (CPTCHGAG), and 203 to 210 (CRKCHGEG).

This sequence belongs to the DnaJ family. As to quaternary structure, homodimer. The cofactor is Zn(2+).

The protein resides in the cytoplasm. Functionally, participates actively in the response to hyperosmotic and heat shock by preventing the aggregation of stress-denatured proteins and by disaggregating proteins, also in an autonomous, DnaK-independent fashion. Unfolded proteins bind initially to DnaJ; upon interaction with the DnaJ-bound protein, DnaK hydrolyzes its bound ATP, resulting in the formation of a stable complex. GrpE releases ADP from DnaK; ATP binding to DnaK triggers the release of the substrate protein, thus completing the reaction cycle. Several rounds of ATP-dependent interactions between DnaJ, DnaK and GrpE are required for fully efficient folding. Also involved, together with DnaK and GrpE, in the DNA replication of plasmids through activation of initiation proteins. The protein is Chaperone protein DnaJ of Chromohalobacter salexigens (strain ATCC BAA-138 / DSM 3043 / CIP 106854 / NCIMB 13768 / 1H11).